The following is a 475-amino-acid chain: Rho GTPase-activating protein 15 (475 aa).

The segment covering methionine 1 to glycine 22 has biased composition (polar residues). Residues methionine 1–alanine 23 are disordered. Serine 43, serine 103, serine 196, serine 199, and serine 243 each carry phosphoserine. Positions methionine 79–aspartate 189 constitute a PH domain. The Rho-GAP domain maps to serine 281 to phenylalanine 470.

Expressed in lung, liver and lymphoid cells.

Its subcellular location is the cytoplasm. It localises to the membrane. In terms of biological role, GTPase activator for the Rho-type GTPases by converting them to an inactive GDP-bound state. Has activity toward RAC1. Overexpression results in an increase in actin stress fibers and cell contraction. The protein is Rho GTPase-activating protein 15 (ARHGAP15) of Homo sapiens (Human).